Consider the following 498-residue polypeptide: ATP synthase subunit beta, chloroplastic (498 aa).

Residue 172 to 179 (GGAGVGKT) participates in ATP binding.

The protein belongs to the ATPase alpha/beta chains family. As to quaternary structure, F-type ATPases have 2 components, CF(1) - the catalytic core - and CF(0) - the membrane proton channel. CF(1) has five subunits: alpha(3), beta(3), gamma(1), delta(1), epsilon(1). CF(0) has four main subunits: a(1), b(1), b'(1) and c(9-12).

The protein resides in the plastid. Its subcellular location is the chloroplast thylakoid membrane. It carries out the reaction ATP + H2O + 4 H(+)(in) = ADP + phosphate + 5 H(+)(out). In terms of biological role, produces ATP from ADP in the presence of a proton gradient across the membrane. The catalytic sites are hosted primarily by the beta subunits. The protein is ATP synthase subunit beta, chloroplastic of Myristica fragrans (Nutmeg).